Consider the following 297-residue polypeptide: Adrenocorticotropic hormone receptor (297 aa).

The Extracellular portion of the chain corresponds to methionine 1–proline 23. 2 N-linked (GlcNAc...) asparagine glycosylation sites follow: asparagine 12 and asparagine 17. Cystine bridges form between cysteine 21/cysteine 253 and cysteine 245/cysteine 251. The helical transmembrane segment at valine 24–valine 49 threads the bilayer. Residues isoleucine 50–proline 58 lie on the Cytoplasmic side of the membrane. A helical transmembrane segment spans residues methionine 59–leucine 79. Over glutamate 80–aspartate 104 the chain is Extracellular. The helical transmembrane segment at valine 105–alanine 126 threads the bilayer. Over aspartate 127 to alanine 147 the chain is Cytoplasmic. A helical transmembrane segment spans residues alanine 148–phenylalanine 168. The Extracellular segment spans residues serine 169–alanine 180. A helical membrane pass occupies residues leucine 181 to leucine 199. Residues alanine 200–glycine 217 lie on the Cytoplasmic side of the membrane. Residues alanine 218–phenylalanine 244 traverse the membrane as a helical segment. The Extracellular segment spans residues cysteine 245–alanine 256. A helical transmembrane segment spans residues leucine 257–phenylalanine 278. The Cytoplasmic portion of the chain corresponds to arginine 279–proline 297. Cysteine 293 is lipidated: S-palmitoyl cysteine.

The protein belongs to the G-protein coupled receptor 1 family. Homodimer. Interacts with corticotropin (ACTH). Interacts with MRAP; this interaction targets MC2R to the plasma membrane. Interacts with MRAP2; competing with MRAP for binding to MC2R and impairing the binding of corticotropin (ACTH). Post-translationally, ubiquitinated by MGRN1 that may be involved in post-endocytic trafficking and/or degradation of internalized receptor. As to expression, expressed in skin and adrenal gland tissues.

It localises to the cell membrane. Its function is as follows. Hormone receptor primarily expressed in adrenal cortex that plays a key role in regulating adrenocortical function. Upon corticotropin (ACTH) binding, facilitates the release of adrenal glucocorticoids, including cortisol and corticosterone. In addition, MC2R is required for fetal and neonatal adrenal gland development. Mechanistically, activates adenylate cyclase (cAMP), the MAPK cascade as well as the cAMP-dependent protein kinase A pathway leading to steroidogenic factor 1/NR5A1-mediated transcriptional activation. The polypeptide is Adrenocorticotropic hormone receptor (MC2R) (Sus scrofa (Pig)).